The primary structure comprises 216 residues: ATP-dependent Clp protease proteolytic subunit (216 aa).

The active-site Nucleophile is serine 103. Histidine 128 is a catalytic residue. A disordered region spans residues 197–216 (RRPALPGDDAPRDVSEGPTP).

This sequence belongs to the peptidase S14 family. As to quaternary structure, fourteen ClpP subunits assemble into 2 heptameric rings which stack back to back to give a disk-like structure with a central cavity, resembling the structure of eukaryotic proteasomes.

It is found in the cytoplasm. It carries out the reaction Hydrolysis of proteins to small peptides in the presence of ATP and magnesium. alpha-casein is the usual test substrate. In the absence of ATP, only oligopeptides shorter than five residues are hydrolyzed (such as succinyl-Leu-Tyr-|-NHMec, and Leu-Tyr-Leu-|-Tyr-Trp, in which cleavage of the -Tyr-|-Leu- and -Tyr-|-Trp bonds also occurs).. Functionally, cleaves peptides in various proteins in a process that requires ATP hydrolysis. Has a chymotrypsin-like activity. Plays a major role in the degradation of misfolded proteins. The chain is ATP-dependent Clp protease proteolytic subunit from Sphingopyxis alaskensis (strain DSM 13593 / LMG 18877 / RB2256) (Sphingomonas alaskensis).